A 705-amino-acid polypeptide reads, in one-letter code: Polyribonucleotide nucleotidyltransferase (705 aa).

Mg(2+) contacts are provided by Asp-487 and Asp-493. The KH domain occupies 554–613; the sequence is PKILTMAIEPDKIRDVIGPSGKQINQIIDETGVKIDIEQDGSIFISSTDNEMNKKAKQII. Positions 623 to 691 constitute an S1 motif domain; it reads GQIYLGKVKR…RQGRVNLSRK (69 aa).

The protein belongs to the polyribonucleotide nucleotidyltransferase family. Mg(2+) is required as a cofactor.

The protein localises to the cytoplasm. It carries out the reaction RNA(n+1) + phosphate = RNA(n) + a ribonucleoside 5'-diphosphate. Involved in mRNA degradation. Catalyzes the phosphorolysis of single-stranded polyribonucleotides processively in the 3'- to 5'-direction. This chain is Polyribonucleotide nucleotidyltransferase, found in Oceanobacillus iheyensis (strain DSM 14371 / CIP 107618 / JCM 11309 / KCTC 3954 / HTE831).